Consider the following 489-residue polypeptide: Beta-galactosidase (489 aa).

At Lys116 the chain carries N6-methyllysine; partial. Lys135 carries the post-translational modification N6-methyllysine. Glu206 functions as the Proton donor in the catalytic mechanism. Lys273 and Lys311 each carry N6-methyllysine; partial. Residue Lys332 is modified to N6-methyllysine. The active-site Nucleophile is Glu387.

As to quaternary structure, homotetramer.

It carries out the reaction Hydrolysis of terminal non-reducing beta-D-galactose residues in beta-D-galactosides.. In Saccharolobus solfataricus (strain ATCC 35092 / DSM 1617 / JCM 11322 / P2) (Sulfolobus solfataricus), this protein is Beta-galactosidase (lacS).